The primary structure comprises 241 residues: MTEGEGRIQLEPSWKARVGDWLLRPQMQELSAFLRQRKAAGARVFPPGPQIFAAFDATPFEQVKVVILGQDPYHGEGQAHGLCFSVLPGVPVPPSLLNIYKEIQDDLGIARPDHGYLMPWARQGVLLLNAVLTVEQGRAGAHQNKGWEGFTDHVVDTLNREREGLVFLLWGSYAQSKGKVIDQARHRVLKAPHPSPLSAHRGFLGCRHFSKTNDHLRRRGLSPIDWSLPPRSALDTTSTGA.

D71 (proton acceptor) is an active-site residue.

The protein belongs to the uracil-DNA glycosylase (UDG) superfamily. UNG family.

Its subcellular location is the cytoplasm. It catalyses the reaction Hydrolyzes single-stranded DNA or mismatched double-stranded DNA and polynucleotides, releasing free uracil.. Functionally, excises uracil residues from the DNA which can arise as a result of misincorporation of dUMP residues by DNA polymerase or due to deamination of cytosine. In Xanthomonas euvesicatoria pv. vesicatoria (strain 85-10) (Xanthomonas campestris pv. vesicatoria), this protein is Uracil-DNA glycosylase.